Here is a 150-residue protein sequence, read N- to C-terminus: Arginine repressor (150 aa).

The protein belongs to the ArgR family.

It is found in the cytoplasm. Its pathway is amino-acid biosynthesis; L-arginine biosynthesis [regulation]. In terms of biological role, regulates arginine biosynthesis genes. This Clostridium botulinum (strain Alaska E43 / Type E3) protein is Arginine repressor.